The sequence spans 341 residues: L-threonine 3-dehydrogenase (341 aa).

A Zn(2+)-binding site is contributed by cysteine 38. Residues threonine 40 and histidine 43 each act as charge relay system in the active site. Residues histidine 63, glutamate 64, cysteine 93, cysteine 96, cysteine 99, and cysteine 107 each contribute to the Zn(2+) site. Residues isoleucine 175, aspartate 195, arginine 200, 262–264, and 286–287 contribute to the NAD(+) site; these read LGI and IY.

The protein belongs to the zinc-containing alcohol dehydrogenase family. In terms of assembly, homotetramer. Zn(2+) is required as a cofactor.

It is found in the cytoplasm. The enzyme catalyses L-threonine + NAD(+) = (2S)-2-amino-3-oxobutanoate + NADH + H(+). It functions in the pathway amino-acid degradation; L-threonine degradation via oxydo-reductase pathway; glycine from L-threonine: step 1/2. Catalyzes the NAD(+)-dependent oxidation of L-threonine to 2-amino-3-ketobutyrate. In Shewanella loihica (strain ATCC BAA-1088 / PV-4), this protein is L-threonine 3-dehydrogenase.